A 935-amino-acid polypeptide reads, in one-letter code: Non-structural polyprotein 1A (935 aa).

A coiled-coil region spans residues 104-142 (KLIHKANALQERLRLSQEEKATLALDVQFLQHENVRLKE). The next 4 membrane-spanning stretches (helical) occupy residues 239 to 259 (VFYYIHYYEMWNIFMFVLAIG), 286 to 306 (VLPTIPFHTTMTLWVMNTLMV), 313 to 333 (LLAITLAILAPILGIIFLCFM), and 344 to 364 (GLIATAVLIAGGHACLTLTGT). Active-site charge relay system; for serine protease activity residues include histidine 461, aspartate 489, and serine 551. Positions 587 to 620 (VKAPSQVELLKEEIERLKAQLNSATENATTVVTQ) form a coiled coil. Tyrosine 693 is modified (O-(5'-phospho-RNA)-tyrosine). 2 disordered regions span residues 756–828 (AKPI…YSQT) and 915–935 (NKAPKNYKGPQKTKGPKTTTH). The segment covering 922 to 935 (KGPQKTKGPKTTTH) has biased composition (low complexity).

Belongs to the astroviridae polyprotein 1A family. As to quaternary structure, monomer. Post-translationally, cleaved by the viral and host proteases. The protease is probably autocatalytically cleaved.

It localises to the host membrane. The enzyme catalyses RNA(n) + a ribonucleoside 5'-triphosphate = RNA(n+1) + diphosphate. In terms of biological role, responsible for the cleavage of the polyprotein into functional products. Protein covalently attached to the 5' extremity of the genomic and subgenomic RNAs. It may serve as a primer for the replicase. This chain is Non-structural polyprotein 1A (ORF1), found in Human astrovirus-1 (HAstV-1).